Here is a 467-residue protein sequence, read N- to C-terminus: ATP synthase subunit beta (467 aa).

ATP is bound at residue 150 to 157 (GGAGVGKT).

Belongs to the ATPase alpha/beta chains family. F-type ATPases have 2 components, CF(1) - the catalytic core - and CF(0) - the membrane proton channel. CF(1) has five subunits: alpha(3), beta(3), gamma(1), delta(1), epsilon(1). CF(0) has three main subunits: a(1), b(2) and c(9-12). The alpha and beta chains form an alternating ring which encloses part of the gamma chain. CF(1) is attached to CF(0) by a central stalk formed by the gamma and epsilon chains, while a peripheral stalk is formed by the delta and b chains.

The protein resides in the cell inner membrane. The catalysed reaction is ATP + H2O + 4 H(+)(in) = ADP + phosphate + 5 H(+)(out). Its function is as follows. Produces ATP from ADP in the presence of a proton gradient across the membrane. The catalytic sites are hosted primarily by the beta subunits. The chain is ATP synthase subunit beta from Aliivibrio fischeri (strain MJ11) (Vibrio fischeri).